The chain runs to 354 residues: Selection and upkeep of intraepithelial T-cells protein 10 (354 aa).

The signal sequence occupies residues 1–52 (MFLRTQMEQSQADIFALIKPHFGVMESSASYLPGFFMTFLLLQTTVLTQAMS). In terms of domain architecture, Ig-like V-type spans 53–141 (LDIQINIQVP…TNREKKRSVV (89 aa)). Over 53–158 (LDIQINIQVP…SEYMSLMSNK (106 aa)) the chain is Extracellular. C71 and C125 are disulfide-bonded. N129 carries N-linked (GlcNAc...) asparagine glycosylation. The helical transmembrane segment at 159-179 (FSCPLTYLFIIIFLNCLKGML) threads the bilayer. The Cytoplasmic portion of the chain corresponds to 180-209 (DFCCLKGKPVYFRELINKIKEVLNIKMRAC). Residues 210-230 (CTLIWEFLLIVLYIAFLPFYL) traverse the membrane as a helical segment. Residues 231 to 252 (KFRSRASILDDAYPLHSNWLWD) lie on the Extracellular side of the membrane. A helical membrane pass occupies residues 253-273 (ICIVLSVLMIFFTGLSLFLLW). Topologically, residues 274–354 (TLNCYGQMSY…RLDCSLNWKT (81 aa)) are cytoplasmic.

Belongs to the SKINT family. Expressed in skin and thymus.

The protein resides in the membrane. Functionally, may act by engaging a cell surface molecule on immature T-cells in the embryonic thymus. The sequence is that of Selection and upkeep of intraepithelial T-cells protein 10 (Skint10) from Mus musculus (Mouse).